An 84-amino-acid polypeptide reads, in one-letter code: Putative membrane protein insertion efficiency factor (84 aa).

The protein belongs to the UPF0161 family.

The protein resides in the cell inner membrane. In terms of biological role, could be involved in insertion of integral membrane proteins into the membrane. This is Putative membrane protein insertion efficiency factor from Shewanella oneidensis (strain ATCC 700550 / JCM 31522 / CIP 106686 / LMG 19005 / NCIMB 14063 / MR-1).